The sequence spans 129 residues: MAGRGKGKTAGKKAVSRSAKAGLQFPVGRIARYLKKGKYAERIGAGAPVYLAAVLEYLTAEVLELAGNAARDNKKNRIVPRHIQLAIRNDEELGKLLGDVTIASGGVLPNIHAVLLPKKSKGGKGEEAA.

Belongs to the histone H2A family. In terms of assembly, the nucleosome is a histone octamer containing two molecules each of H2A, H2B, H3 and H4 assembled in one H3-H4 heterotetramer and two H2A-H2B heterodimers. The octamer wraps approximately 147 bp of DNA.

The protein resides in the nucleus. It localises to the chromosome. In terms of biological role, core component of nucleosome. Nucleosomes wrap and compact DNA into chromatin, limiting DNA accessibility to the cellular machineries which require DNA as a template. Histones thereby play a central role in transcription regulation, DNA repair, DNA replication and chromosomal stability. DNA accessibility is regulated via a complex set of post-translational modifications of histones, also called histone code, and nucleosome remodeling. This Volvox carteri (Green alga) protein is Histone H2A-III.